Reading from the N-terminus, the 452-residue chain is Cysteine--tRNA ligase (452 aa).

Cys27 is a Zn(2+) binding site. The short motif at 29 to 39 (PTVQDHFHIGH) is the 'HIGH' region element. Zn(2+) contacts are provided by Asp207, His232, and Glu236. The 'KMSKS' region signature appears at 265–269 (KMSKS). An ATP-binding site is contributed by Lys268.

The protein belongs to the class-I aminoacyl-tRNA synthetase family. Zn(2+) serves as cofactor.

It localises to the cytoplasm. The catalysed reaction is tRNA(Cys) + L-cysteine + ATP = L-cysteinyl-tRNA(Cys) + AMP + diphosphate. The polypeptide is Cysteine--tRNA ligase (Thermoplasma acidophilum (strain ATCC 25905 / DSM 1728 / JCM 9062 / NBRC 15155 / AMRC-C165)).